The primary structure comprises 366 residues: Galactoside alpha-(1,2)-fucosyltransferase 1 (366 aa).

Over 1–8 (MWPLSHRH) the chain is Cytoplasmic. A helical; Signal-anchor for type II membrane protein membrane pass occupies residues 9-25 (LCLAFLLVCVLSAISFF). Residues 26 to 366 (LHVHQDSFRH…LSPLWTLAEP (341 aa)) lie on the Lumenal side of the membrane. 3 N-linked (GlcNAc...) asparagine glycosylation sites follow: Asn-66, Asn-302, and Asn-328.

The protein belongs to the glycosyltransferase 11 family.

The protein resides in the golgi apparatus. Its subcellular location is the golgi stack membrane. It carries out the reaction a beta-D-galactosyl-(1-&gt;4)-N-acetyl-beta-D-glucosaminyl derivative + GDP-beta-L-fucose = an alpha-L-Fuc-(1-&gt;2)-beta-D-Gal-(1-&gt;4)-beta-D-GlcNAc derivative + GDP + H(+). It catalyses the reaction a ganglioside GA1 + GDP-beta-L-fucose = a ganglioside Fuc-GA1 + GDP + H(+). The enzyme catalyses a beta-D-Gal-(1-&gt;3)-beta-D-GlcNAc-(1-&gt;3)-beta-D-Gal-(1-&gt;4)-beta-D-Glc-(1&lt;-&gt;1')-Cer(d18:1(4E)) + GDP-beta-L-fucose = alpha-L-fucosyl-(1-&gt;2)- beta-D-galactosyl-(1-&gt;3)-N-acetyl-beta-D-glucosaminyl-(1-&gt;3)-beta-D-galactosyl-(1-&gt;4)-beta-D-glucosyl-(1&lt;-&gt;1')-N-acylsphing-4-enine + GDP + H(+). The catalysed reaction is a neolactoside nLc4Cer(d18:1(4E)) + GDP-beta-L-fucose = a neolactoside IV(2)-alpha-Fuc-nLc4Cer(d18:1(4E)) + GDP + H(+). It carries out the reaction a ganglioside GM1 + GDP-beta-L-fucose = a ganglioside Fuc-GM1 + GDP + H(+). It catalyses the reaction beta-D-galactosyl-(1-&gt;3)-N-acetyl-D-galactosamine + GDP-beta-L-fucose = alpha-L-fucosyl-(1-&gt;2)-beta-D-galactosyl-(1-&gt;3)-N-acetyl-D-galactosamine + GDP + H(+). It functions in the pathway protein modification; protein glycosylation. In terms of biological role, catalyzes the transfer of L-fucose, from a guanosine diphosphate-beta-L-fucose, to the terminal galactose residue of glycoconjugates through an alpha(1,2) linkage leading to H antigen synthesis that is an intermediate substrate in the synthesis of ABO blood group antigens. H antigen is essential for maturation of the glomerular layer of the main olfactory bulb, in cell migration and early cell-cell contacts during tumor associated angiogenesis. Preferentially fucosylates soluble lactose and to a lesser extent fucosylates glycolipids gangliosides GA1 and GM1a. This chain is Galactoside alpha-(1,2)-fucosyltransferase 1, found in Alouatta belzebul (Red-handed howler monkey).